Reading from the N-terminus, the 333-residue chain is Glycogenin-1 (333 aa).

The residue at position 2 (T2) is an N-acetylthreonine. 4 residues coordinate UDP: L9, T11, N12, and Y15. Residues L9, T11, N12, and Y15 each coordinate UDP-alpha-D-glucose. S44 bears the Phosphoserine; by PKA; in vitro mark. R77 contacts UDP. Residues R77, K86, D102, A103, D104, N133, S134, D160, D163, and Q164 each contribute to the UDP-alpha-D-glucose site. Residues D102, A103, and D104 each contribute to the UDP site. D102 provides a ligand contact to Mn(2+). Mn(2+) is bound at residue D104. An O-linked (Glc...) tyrosine glycan is attached at Y195. UDP-binding residues include H212, G215, and K218. H212 serves as a coordination point for Mn(2+). Residues G215 and K218 each contribute to the UDP-alpha-D-glucose site. Residues S284 to M316 form an interaction with GYS1 region.

This sequence belongs to the glycosyltransferase 8 family. Glycogenin subfamily. As to quaternary structure, part of the GYS1-GYG1 complex, a heterooctamer composed of a tetramer of GYS1 and 2 dimers of GYG1, where each GYS1 protomer binds to one GYG1 subunit (via GYG1 C-terminus); the GYS1 tetramer may dissociate from GYG1 dimers to continue glycogen polymerization on its own. May also form a heterooctamer complex with GYS2 (via GYG1 C-terminus). It depends on Mn(2+) as a cofactor. Post-translationally, self-glycosylated by the transfer of glucose residues from UDP-glucose to itself, forming an alpha-1,4-glycan of around 10 residues attached to Tyr-195. Phosphorylated. Detected in heart, skeletal muscle, brain and testis, and at lower levels in kidney.

Its subcellular location is the cytoplasm. The protein localises to the nucleus. The catalysed reaction is L-tyrosyl-[glycogenin] + UDP-alpha-D-glucose = alpha-D-glucosyl-L-tyrosyl-[glycogenin] + UDP + H(+). It catalyses the reaction [1,4-alpha-D-glucosyl](n)-L-tyrosyl-[glycogenin] + UDP-alpha-D-glucose = [1,4-alpha-D-glucosyl](n+1)-L-tyrosyl-[glycogenin] + UDP + H(+). Its pathway is glycan biosynthesis; glycogen biosynthesis. Glycogenin participates in the glycogen biosynthetic process along with glycogen synthase and glycogen branching enzyme. It catalyzes the formation of a short alpha (1,4)-glucosyl chain covalently attached via a glucose 1-O-tyrosyl linkage to internal tyrosine residues and these chains act as primers for the elongation reaction catalyzed by glycogen synthase. The polypeptide is Glycogenin-1 (GYG1) (Oryctolagus cuniculus (Rabbit)).